Here is a 367-residue protein sequence, read N- to C-terminus: Molybdenum import ATP-binding protein ModC (367 aa).

The ABC transporter domain maps to 1–234 (MSSAALEVRL…PALSGGFGHE (234 aa)). 33–40 (GPSGAGKS) lines the ATP pocket. A Mop domain is found at 293–366 (HISLHNILPV…IKSVAVDVLG (74 aa)).

It belongs to the ABC transporter superfamily. Molybdate importer (TC 3.A.1.8) family. The complex is composed of two ATP-binding proteins (ModC), two transmembrane proteins (ModB) and a solute-binding protein (ModA).

The protein resides in the cell inner membrane. The enzyme catalyses molybdate(out) + ATP + H2O = molybdate(in) + ADP + phosphate + H(+). Part of the ABC transporter complex ModABC involved in molybdenum import. Responsible for energy coupling to the transport system. This chain is Molybdenum import ATP-binding protein ModC, found in Granulibacter bethesdensis (strain ATCC BAA-1260 / CGDNIH1).